The primary structure comprises 159 residues: ATP synthase subunit b (159 aa).

The chain crosses the membrane as a helical span at residues 7–27 (TFVWTIINFLLLLVVLSYFLF).

It belongs to the ATPase B chain family. In terms of assembly, F-type ATPases have 2 components, F(1) - the catalytic core - and F(0) - the membrane proton channel. F(1) has five subunits: alpha(3), beta(3), gamma(1), delta(1), epsilon(1). F(0) has three main subunits: a(1), b(2) and c(10-14). The alpha and beta chains form an alternating ring which encloses part of the gamma chain. F(1) is attached to F(0) by a central stalk formed by the gamma and epsilon chains, while a peripheral stalk is formed by the delta and b chains.

It localises to the cell membrane. In terms of biological role, f(1)F(0) ATP synthase produces ATP from ADP in the presence of a proton or sodium gradient. F-type ATPases consist of two structural domains, F(1) containing the extramembraneous catalytic core and F(0) containing the membrane proton channel, linked together by a central stalk and a peripheral stalk. During catalysis, ATP synthesis in the catalytic domain of F(1) is coupled via a rotary mechanism of the central stalk subunits to proton translocation. Functionally, component of the F(0) channel, it forms part of the peripheral stalk, linking F(1) to F(0). In Clostridium novyi (strain NT), this protein is ATP synthase subunit b.